Consider the following 138-residue polypeptide: Host cell factor C1 regulator 1 (138 aa).

Positions 76-79 (DHPY) are interaction with HCFC1. The short motif at 110–119 (IPEALRLLRL) is the Nuclear export signal element.

As to quaternary structure, interacts with HCFC1. In terms of tissue distribution, widely expressed.

The protein resides in the cytoplasm. It localises to the nucleus. In terms of biological role, regulates HCFC1 activity by modulating its subcellular localization. Overexpression of HCFC1R1 leads to accumulation of HCFC1 in the cytoplasm. HCFC1R1-mediated export may provide the pool of cytoplasmic HCFC1 required for import of virion-derived VP16 into the nucleus. This chain is Host cell factor C1 regulator 1 (HCFC1R1), found in Homo sapiens (Human).